Here is a 393-residue protein sequence, read N- to C-terminus: Formate-dependent phosphoribosylglycinamide formyltransferase (393 aa).

N(1)-(5-phospho-beta-D-ribosyl)glycinamide is bound by residues 20-21 (EL) and glutamate 80. ATP-binding positions include arginine 112, lysine 153, 158-163 (SSGKGQ), 193-196 (EAFI), and glutamate 201. The ATP-grasp domain occupies 117–306 (RLAAEDLNLP…EFELHVRAVL (190 aa)). Positions 265 and 277 each coordinate Mg(2+). N(1)-(5-phospho-beta-D-ribosyl)glycinamide contacts are provided by residues aspartate 284, lysine 354, and 361-362 (RR).

It belongs to the PurK/PurT family. Homodimer.

The enzyme catalyses N(1)-(5-phospho-beta-D-ribosyl)glycinamide + formate + ATP = N(2)-formyl-N(1)-(5-phospho-beta-D-ribosyl)glycinamide + ADP + phosphate + H(+). It functions in the pathway purine metabolism; IMP biosynthesis via de novo pathway; N(2)-formyl-N(1)-(5-phospho-D-ribosyl)glycinamide from N(1)-(5-phospho-D-ribosyl)glycinamide (formate route): step 1/1. Functionally, involved in the de novo purine biosynthesis. Catalyzes the transfer of formate to 5-phospho-ribosyl-glycinamide (GAR), producing 5-phospho-ribosyl-N-formylglycinamide (FGAR). Formate is provided by PurU via hydrolysis of 10-formyl-tetrahydrofolate. The sequence is that of Formate-dependent phosphoribosylglycinamide formyltransferase from Syntrophotalea carbinolica (strain DSM 2380 / NBRC 103641 / GraBd1) (Pelobacter carbinolicus).